Reading from the N-terminus, the 324-residue chain is Olfactory receptor 52N5 (324 aa).

The Extracellular segment spans residues 1-33 (MPLFNSLCWFPTIHVTPPSFILNGIPGLERVHV). Residues 34–54 (WISLPLCTMYIIFLVGNLGLV) form a helical membrane-spanning segment. Over 55 to 62 (YLIYYEES) the chain is Cytoplasmic. A helical transmembrane segment spans residues 63 to 84 (LHHPMYFFFGHALSLIDLLTCT). The Extracellular portion of the chain corresponds to 85 to 108 (TTLPNALCIFWFSLKEINFNACLA). Cysteine 106 and cysteine 198 are joined by a disulfide. Residues 109-129 (QMFFVHGFTGVESGVLMLMAL) form a helical membrane-spanning segment. Residues 130–148 (DRYVAICYPLRYATTLTNP) are Cytoplasmic-facing. A helical transmembrane segment spans residues 149-169 (IIAKAELATFLRGVLLMIPFP). Residues 170–205 (FLVKRLPFCQSNIISHTYCDHMSVVKLSCASIKVNV) lie on the Extracellular side of the membrane. Residues 206 to 226 (IYGLMVALLIGVFDICCISLS) form a helical membrane-spanning segment. Residues 227–246 (YTLILKAAISLSSSDARQKA) are Cytoplasmic-facing. The helical transmembrane segment at 247 to 267 (FSTCTAHISAIIITYVPAFFT) threads the bilayer. At 268-283 (FFAHRFGGHTIPPSLH) the chain is on the extracellular side. Residues 284 to 304 (IIVANLYLLLPPTLNPIVYGV) traverse the membrane as a helical segment. The Cytoplasmic portion of the chain corresponds to 305–324 (KTKQIRKSVIKFFQGDKGAG).

Belongs to the G-protein coupled receptor 1 family.

It localises to the cell membrane. Functionally, odorant receptor. The sequence is that of Olfactory receptor 52N5 (OR52N5) from Homo sapiens (Human).